The primary structure comprises 415 residues: Serine hydroxymethyltransferase (415 aa).

(6S)-5,6,7,8-tetrahydrofolate is bound by residues Leu117 and 121-123 (GHL). At Lys226 the chain carries N6-(pyridoxal phosphate)lysine. Residue 349-351 (SPF) participates in (6S)-5,6,7,8-tetrahydrofolate binding.

It belongs to the SHMT family. As to quaternary structure, homodimer. It depends on pyridoxal 5'-phosphate as a cofactor.

The protein resides in the cytoplasm. It catalyses the reaction (6R)-5,10-methylene-5,6,7,8-tetrahydrofolate + glycine + H2O = (6S)-5,6,7,8-tetrahydrofolate + L-serine. It functions in the pathway one-carbon metabolism; tetrahydrofolate interconversion. It participates in amino-acid biosynthesis; glycine biosynthesis; glycine from L-serine: step 1/1. Functionally, catalyzes the reversible interconversion of serine and glycine with tetrahydrofolate (THF) serving as the one-carbon carrier. This reaction serves as the major source of one-carbon groups required for the biosynthesis of purines, thymidylate, methionine, and other important biomolecules. Also exhibits THF-independent aldolase activity toward beta-hydroxyamino acids, producing glycine and aldehydes, via a retro-aldol mechanism. The chain is Serine hydroxymethyltransferase from Geobacter sp. (strain M21).